The sequence spans 833 residues: Urease (833 aa).

Residues 395–833 (GALDVHVHYI…LPLTKRYFVY (439 aa)) form the Urease domain. Ni(2+)-binding residues include His-400 and His-402. His-402 and Ala-433 together coordinate urea. Ni(2+) is bound at residue Lys-483. The residue at position 483 (Lys-483) is an N6-carboxylysine. Urea contacts are provided by His-485 and His-512. The Ni(2+) site is built by His-512 and His-538. The Proton donor role is filled by His-586. Residue Asp-626 coordinates Ni(2+). Ala-629 provides a ligand contact to urea.

It in the C-terminal section; belongs to the metallo-dependent hydrolases superfamily. Urease alpha subunit family. In terms of assembly, homohexamer. Ni(2+) is required as a cofactor. In terms of processing, carboxylation allows a single lysine to coordinate two nickel ions.

It carries out the reaction urea + 2 H2O + H(+) = hydrogencarbonate + 2 NH4(+). Its pathway is nitrogen metabolism; urea degradation; CO(2) and NH(3) from urea (urease route): step 1/1. The urease accessory proteins URE4, URE6 and URE7 are required for urease activity, URE7 supplying nickel for the functional urease. In terms of biological role, plays a nutritional role via nitrogen acquisition in the environment. Contributes to the central nervous system invasion by enhancing yeast sequestration within microcapillary beds (such as within the brain) during hematogenous spread, thereby facilitating blood-to-brain invasion by C.neoformans. Affects fitness within the mammalian phagosome, promoting non-lytic exocytosis while delaying intracellular replication and thus reducing phagolysosomal membrane damage, events that could facilitate cryptococcal dissemination when transported inside macrophages. Urease activity is also associated with the regulation of key intracellular metabolic pathways, including melanin biosynthesis, polyamine biosynthesis, as well as intracellular levels of proline and reactive oxygen species. This is Urease from Cryptococcus neoformans var. neoformans serotype D (strain B-3501A) (Filobasidiella neoformans).